Reading from the N-terminus, the 405-residue chain is Envelope glycoprotein M (405 aa).

Residues 1–17 (MKSSKNDTFVYRTWVKT) lie on the Intravirion side of the membrane. The chain crosses the membrane as a helical span at residues 18-38 (LVVYFVMFVMSAVVPITAMFP). Over 39 to 76 (NLGYPCYFNALVDYGALNLTNYNLAHHLTPTLYLEPPE) the chain is Virion surface. A helical transmembrane segment spans residues 77–97 (MFVYITLVFIADCVAFIYYAC). Topologically, residues 98–121 (GEVALIKARKKVSGLTDLSAWVSA) are intravirion. A helical membrane pass occupies residues 122 to 142 (VGSPTVLFLAILKLWSIQVFI). Over 143 to 149 (QVLSYKH) the chain is Virion surface. Residues 150-170 (VFLSAFVYFLHFLASVLHACA) form a helical membrane-spanning segment. Over 171 to 192 (CVTRFSPVWVVKAQDNSIPQDT) the chain is Intravirion. Residues 193 to 215 (FLWWVVFYLKPVVTNLYLGCLAL) traverse the membrane as a helical segment. The Virion surface portion of the chain corresponds to 216-245 (ETLVFSLSVFLALGNSFYFMVGDMVLGAVN). Residues 246–266 (LFLILPIFWYILTEVWLASFM) form a helical membrane-spanning segment. Residue Arg267 is a topological domain, intravirion. Residues 268–288 (HNFGFYCGMFIASIILILPLV) form a helical membrane-spanning segment. The Virion surface segment spans residues 289–299 (RYEAVFVSAKL). The helical transmembrane segment at 300–320 (HTTVAINVAIIPILCSVAMLI) threads the bilayer. The Intravirion segment spans residues 321-405 (RICRIFKSMR…TTDSEEEIFP (85 aa)). The segment at 346–405 (LESEPRPRPSRTPSPGRNRRRSSTSSSSSRSTRRQRPVSTQALVSSVLPMTTDSEEEIFP) is disordered. Positions 386–397 (QALVSSVLPMTT) are enriched in polar residues.

This sequence belongs to the herpesviridae glycoprotein M family. As to quaternary structure, interacts (via N-terminus) with gN (via N-terminus). The gM-gN heterodimer forms the gCII complex.

The protein localises to the virion membrane. It localises to the host Golgi apparatus. Its subcellular location is the host trans-Golgi network. It is found in the host endosome membrane. The protein resides in the host nucleus inner membrane. Envelope glycoprotein important for virion assembly and egress. Plays a role in the correct incorporation of gH-gL into virion membrane. Directs the glycoprotein N (gN) to the host trans-Golgi network. The protein is Envelope glycoprotein M of Epstein-Barr virus (strain GD1) (HHV-4).